Reading from the N-terminus, the 141-residue chain is HTH-type transcriptional repressor NsrR (141 aa).

Positions 2–129 (QLTSFTDYGL…DSHTLADMVE (128 aa)) constitute an HTH rrf2-type domain. The H-T-H motif DNA-binding region spans 28 to 51 (ISEVTEVYGVSRNHMVKIINQLSR). [2Fe-2S] cluster-binding residues include Cys-91, Cys-96, and Cys-102.

[2Fe-2S] cluster serves as cofactor.

Functionally, nitric oxide-sensitive repressor of genes involved in protecting the cell against nitrosative stress. May require iron for activity. The sequence is that of HTH-type transcriptional repressor NsrR from Serratia proteamaculans (strain 568).